The following is a 291-amino-acid chain: Protease HtpX homolog (291 aa).

2 helical membrane passes run 4–24 (VFLF…SARL) and 38–58 (MGML…ISLL). His-144 is a Zn(2+) binding site. Glu-145 is a catalytic residue. His-148 is a binding site for Zn(2+). 2 helical membrane-spanning segments follow: residues 159–179 (LIQG…AYAL) and 199–219 (ISSI…VMYF). A Zn(2+)-binding site is contributed by Glu-224.

The protein belongs to the peptidase M48B family. Zn(2+) serves as cofactor.

It is found in the cell inner membrane. The protein is Protease HtpX homolog of Chlorobium phaeovibrioides (strain DSM 265 / 1930) (Prosthecochloris vibrioformis (strain DSM 265)).